Reading from the N-terminus, the 311-residue chain is Mitochondrial ribosome-associated GTPase 1 (311 aa).

In terms of domain architecture, CP-type G spans 27-200 (AKGLKQMKTK…LFDTPGVLSP (174 aa)). Residues 74–77 (NKMD), 144–149 (NVGKSS), and glycine 196 each bind GTP.

This sequence belongs to the TRAFAC class YlqF/YawG GTPase family. MTG1 subfamily.

Its subcellular location is the mitochondrion inner membrane. Its function is as follows. Plays a role in the regulation of the mitochondrial ribosome assembly and of translational activity. Displays mitochondrial GTPase activity. The chain is Mitochondrial ribosome-associated GTPase 1 from Xenopus tropicalis (Western clawed frog).